The sequence spans 336 residues: tRNA-splicing endonuclease (336 aa).

Residues tyrosine 271, histidine 282, and lysine 313 contribute to the active site.

Belongs to the tRNA-intron endonuclease family. Archaeal long subfamily. In terms of assembly, homodimer.

The enzyme catalyses pretRNA = a 3'-half-tRNA molecule with a 5'-OH end + a 5'-half-tRNA molecule with a 2',3'-cyclic phosphate end + an intron with a 2',3'-cyclic phosphate and a 5'-hydroxyl terminus.. Endonuclease that removes tRNA introns. Cleaves pre-tRNA at the 5'- and 3'-splice sites to release the intron. The products are an intron and two tRNA half-molecules bearing 2',3' cyclic phosphate and 5'-OH termini. Recognizes a pseudosymmetric substrate in which 2 bulged loops of 3 bases are separated by a stem of 4 bp. The polypeptide is tRNA-splicing endonuclease (Natronomonas pharaonis (strain ATCC 35678 / DSM 2160 / CIP 103997 / JCM 8858 / NBRC 14720 / NCIMB 2260 / Gabara) (Halobacterium pharaonis)).